Here is a 347-residue protein sequence, read N- to C-terminus: GMP reductase (347 aa).

Position 108–131 (108–131 (ADFDKMKQILALSPALKFICIDVA)) interacts with NADP(+). Positions 181 and 183 each coordinate K(+). The active-site Thioimidate intermediate is the Cys186. 216 to 239 (IVSDGGCSVPGDVAKAFGGGADFV) lines the NADP(+) pocket.

This sequence belongs to the IMPDH/GMPR family. GuaC type 1 subfamily. Homotetramer.

It catalyses the reaction IMP + NH4(+) + NADP(+) = GMP + NADPH + 2 H(+). Functionally, catalyzes the irreversible NADPH-dependent deamination of GMP to IMP. It functions in the conversion of nucleobase, nucleoside and nucleotide derivatives of G to A nucleotides, and in maintaining the intracellular balance of A and G nucleotides. This chain is GMP reductase, found in Yersinia enterocolitica serotype O:8 / biotype 1B (strain NCTC 13174 / 8081).